Consider the following 178-residue polypeptide: 2-oxo-4-hydroxy-4-carboxy-5-ureidoimidazoline decarboxylase (178 aa).

Residue histidine 67 is the Proton donor of the active site. Substrate contacts are provided by residues proline 68, 84–88 (SQREQ), and 119–123 (FVLAA).

The protein belongs to the OHCU decarboxylase family.

It is found in the peroxisome. The enzyme catalyses 5-hydroxy-2-oxo-4-ureido-2,5-dihydro-1H-imidazole-5-carboxylate + H(+) = (S)-allantoin + CO2. The protein operates within purine metabolism; urate degradation; (S)-allantoin from urate: step 3/3. Its function is as follows. Catalyzes the stereoselective decarboxylation of 2-oxo-4-hydroxy-4-carboxy-5-ureidoimidazoline (OHCU) to (S)-allantoin. In Mus musculus (Mouse), this protein is 2-oxo-4-hydroxy-4-carboxy-5-ureidoimidazoline decarboxylase (Urad).